Reading from the N-terminus, the 151-residue chain is 3-dehydroquinate dehydratase (151 aa).

Residue tyrosine 24 is the Proton acceptor of the active site. Substrate contacts are provided by asparagine 76, histidine 82, and aspartate 89. Histidine 102 (proton donor) is an active-site residue. Residues 103–104 and arginine 113 each bind substrate; that span reads LS.

It belongs to the type-II 3-dehydroquinase family. Homododecamer.

The catalysed reaction is 3-dehydroquinate = 3-dehydroshikimate + H2O. It participates in metabolic intermediate biosynthesis; chorismate biosynthesis; chorismate from D-erythrose 4-phosphate and phosphoenolpyruvate: step 3/7. In terms of biological role, catalyzes a trans-dehydration via an enolate intermediate. This chain is 3-dehydroquinate dehydratase, found in Acinetobacter baumannii (strain ATCC 17978 / DSM 105126 / CIP 53.77 / LMG 1025 / NCDC KC755 / 5377).